Here is a 457-residue protein sequence, read N- to C-terminus: uncharacterized protein (457 aa).

Residues 5–63 (PVKKNDVIEVEIIDLTHEGLGVAKVDHYPLFIENALPGEKLEIKVLKTGKSFGYGKVLT) form the TRAM domain. Residues glutamine 287, tyrosine 316, glutamate 337, and aspartate 385 each contribute to the S-adenosyl-L-methionine site. The active-site Nucleophile is the cysteine 412.

This sequence belongs to the class I-like SAM-binding methyltransferase superfamily. RNA M5U methyltransferase family.

This is an uncharacterized protein from Enterococcus faecalis (strain ATCC 700802 / V583).